The primary structure comprises 569 residues: Putative ABC transporter ATP-binding protein TTE1589 (569 aa).

ABC transporter domains follow at residues 8–248 (IIVK…IGLM) and 309–542 (IQAK…LSLK). ATP is bound by residues 43–50 (GPSGAGKS) and 342–349 (GHNGSGKT).

It belongs to the ABC transporter superfamily.

It localises to the cell membrane. Functionally, probably part of an ABC transporter complex. Responsible for energy coupling to the transport system. The polypeptide is Putative ABC transporter ATP-binding protein TTE1589 (Caldanaerobacter subterraneus subsp. tengcongensis (strain DSM 15242 / JCM 11007 / NBRC 100824 / MB4) (Thermoanaerobacter tengcongensis)).